The sequence spans 118 residues: UPF0102 protein Cphy_2398 (118 aa).

Belongs to the UPF0102 family.

The protein is UPF0102 protein Cphy_2398 of Lachnoclostridium phytofermentans (strain ATCC 700394 / DSM 18823 / ISDg) (Clostridium phytofermentans).